The sequence spans 101 residues: RNA-binding protein Hfq (101 aa).

The Sm domain maps to 9–68 (DPYLNALRRERIPVSIYLVNGIKLQGQIESFDQFIILLKNTVSQMVYKHAISTVVPARSI). A disordered region spans residues 68–91 (ISHNNNGSSQAQAPQQAVQTTQPV). Residues 77–91 (QAQAPQQAVQTTQPV) are compositionally biased toward low complexity.

Belongs to the Hfq family. As to quaternary structure, homohexamer.

RNA chaperone that binds small regulatory RNA (sRNAs) and mRNAs to facilitate mRNA translational regulation in response to envelope stress, environmental stress and changes in metabolite concentrations. Also binds with high specificity to tRNAs. In Haemophilus ducreyi (strain 35000HP / ATCC 700724), this protein is RNA-binding protein Hfq.